The chain runs to 589 residues: Sulfite reductase [NADPH] hemoprotein beta-component (589 aa).

[4Fe-4S] cluster-binding residues include Cys-443, Cys-449, Cys-488, and Cys-492. Cys-492 contributes to the siroheme binding site.

It belongs to the nitrite and sulfite reductase 4Fe-4S domain family. As to quaternary structure, alpha(8)-beta(8). The alpha component is a flavoprotein, the beta component is a hemoprotein. It depends on siroheme as a cofactor. Requires [4Fe-4S] cluster as cofactor.

It catalyses the reaction hydrogen sulfide + 3 NADP(+) + 3 H2O = sulfite + 3 NADPH + 4 H(+). It functions in the pathway sulfur metabolism; hydrogen sulfide biosynthesis; hydrogen sulfide from sulfite (NADPH route): step 1/1. Functionally, component of the sulfite reductase complex that catalyzes the 6-electron reduction of sulfite to sulfide. This is one of several activities required for the biosynthesis of L-cysteine from sulfate. This is Sulfite reductase [NADPH] hemoprotein beta-component from Neisseria meningitidis serogroup C (strain 053442).